The sequence spans 258 residues: Phosphate import ATP-binding protein PstB (258 aa).

The ABC transporter domain maps to 5–247 (IDVSGLTAYY…SQIFSNPKEK (243 aa)). Residue 37–44 (GPSGCGKS) participates in ATP binding.

This sequence belongs to the ABC transporter superfamily. Phosphate importer (TC 3.A.1.7) family. The complex is composed of two ATP-binding proteins (PstB), two transmembrane proteins (PstC and PstA) and a solute-binding protein (PstS).

Its subcellular location is the cell membrane. The catalysed reaction is phosphate(out) + ATP + H2O = ADP + 2 phosphate(in) + H(+). In terms of biological role, part of the ABC transporter complex PstSACB involved in phosphate import. Responsible for energy coupling to the transport system. The chain is Phosphate import ATP-binding protein PstB from Frankia casuarinae (strain DSM 45818 / CECT 9043 / HFP020203 / CcI3).